Consider the following 94-residue polypeptide: Neutrophil defensin 3 (94 aa).

A signal peptide spans 1 to 19 (MRTLAILAAILLVALQAQA). A propeptide spanning residues 20–38 (EPLQARADEVAAAPEQIAA) is cleaved from the precursor. 3 cysteine pairs are disulfide-bonded: C66–C94, C68–C83, and C73–C93.

Belongs to the alpha-defensin family. As to quaternary structure, dimer. (Microbial infection) Interacts with herpes virus 1 HHV-1 envelope glycoprotein B; this interaction inhibits viral infection.

The protein localises to the secreted. Effector molecule of the innate immune system that acts via antibiotic-like properties against a broad array of infectious agents including bacteria, fungi, and viruses. Possesses the ability to neutralize bacterial toxins such as B.anthracis lethal factor, Clostridium difficile cytotoxin B as well as leukocidin produced by Staphylococcus aureus. Also blocks herpes simplex virus infection by interacting with envelope glycoprotein B and thus preventing its binding to heparan sulfate, the receptor for attachment. This chain is Neutrophil defensin 3 (DEFA3), found in Homo sapiens (Human).